Here is a 399-residue protein sequence, read N- to C-terminus: Dihydrolipoyllysine-residue succinyltransferase component of 2-oxoglutarate dehydrogenase complex (399 aa).

Residues 2–77 (AIDIKAPTFP…LSGELLGKLT (76 aa)) form the Lipoyl-binding domain. An N6-lipoyllysine modification is found at lysine 43. Residues 104 to 141 (ILSPAARKIAEENAIAADSITGTGKGGRVTKEDAVAAA) enclose the Peripheral subunit-binding (PSBD) domain. Active-site residues include histidine 370 and aspartate 374.

It belongs to the 2-oxoacid dehydrogenase family. In terms of assembly, forms a 24-polypeptide structural core with octahedral symmetry. Part of the 2-oxoglutarate dehydrogenase (OGDH) complex composed of E1 (2-oxoglutarate dehydrogenase), E2 (dihydrolipoamide succinyltransferase) and E3 (dihydrolipoamide dehydrogenase); the complex contains multiple copies of the three enzymatic components (E1, E2 and E3). (R)-lipoate serves as cofactor.

It carries out the reaction N(6)-[(R)-dihydrolipoyl]-L-lysyl-[protein] + succinyl-CoA = N(6)-[(R)-S(8)-succinyldihydrolipoyl]-L-lysyl-[protein] + CoA. The protein operates within amino-acid degradation; L-lysine degradation via saccharopine pathway; glutaryl-CoA from L-lysine: step 6/6. Its function is as follows. E2 component of the 2-oxoglutarate dehydrogenase (OGDH) complex which catalyzes the second step in the conversion of 2-oxoglutarate to succinyl-CoA and CO(2). In Azotobacter vinelandii, this protein is Dihydrolipoyllysine-residue succinyltransferase component of 2-oxoglutarate dehydrogenase complex (sucB).